The following is an 892-amino-acid chain: Alanine--tRNA ligase (892 aa).

4 residues coordinate Zn(2+): His594, His598, Cys702, and His706.

Belongs to the class-II aminoacyl-tRNA synthetase family. Requires Zn(2+) as cofactor.

Its subcellular location is the cytoplasm. The enzyme catalyses tRNA(Ala) + L-alanine + ATP = L-alanyl-tRNA(Ala) + AMP + diphosphate. In terms of biological role, catalyzes the attachment of alanine to tRNA(Ala) in a two-step reaction: alanine is first activated by ATP to form Ala-AMP and then transferred to the acceptor end of tRNA(Ala). Also edits incorrectly charged Ser-tRNA(Ala) and Gly-tRNA(Ala) via its editing domain. This Pyrobaculum arsenaticum (strain DSM 13514 / JCM 11321 / PZ6) protein is Alanine--tRNA ligase.